We begin with the raw amino-acid sequence, 941 residues long: Lysine-specific demethylase 7A (941 aa).

A PHD-type zinc finger spans residues P37–L88. Residues R97–P114 are linker. A JmjC domain is found at F230–K386. Position 279 (T279) interacts with substrate. Residues H282 and D284 each contribute to the Fe cation site. Substrate is bound at residue K299. H354 is a binding site for Fe cation. Disordered stretches follow at residues Q597–E633, T677–S700, and Q819–A921. The residue at position 604 (S604) is a Phosphoserine. Basic and acidic residues-rich tracts occupy residues M618–E633 and G685–S700. Polar residues predominate over residues S834–L876.

Belongs to the JHDM1 histone demethylase family. JHDM1D subfamily. The cofactor is Fe(2+).

Its subcellular location is the nucleus. It catalyses the reaction N(6),N(6)-dimethyl-L-lysyl(9)-[histone H3] + 2 2-oxoglutarate + 2 O2 = L-lysyl(9)-[histone H3] + 2 formaldehyde + 2 succinate + 2 CO2. The catalysed reaction is N(6),N(6)-dimethyl-L-lysyl(27)-[histone H3] + 2 2-oxoglutarate + 2 O2 = L-lysyl(27)-[histone H3] + 2 formaldehyde + 2 succinate + 2 CO2. The enzyme catalyses N(6),N(6)-dimethyl-L-lysyl(36)-[histone H3] + 2-oxoglutarate + O2 = N(6)-methyl-L-lysyl(36)-[histone H3] + formaldehyde + succinate + CO2. It carries out the reaction N(6)-methyl-L-lysyl(20)-[histone H4] + 2-oxoglutarate + O2 = L-lysyl(20)-[histone H4] + formaldehyde + succinate + CO2. Its function is as follows. Histone demethylase required for brain development. Specifically demethylates dimethylated 'Lys-9', 'Lys-27' and 'Lys-36' (H3K9me2, H3K27me2, H3K36me2, respectively) of histone H3 and monomethylated histone H4 'Lys-20' residue (H4K20Me1), thereby playing a central role in histone code. Specifically binds trimethylated 'Lys-4' of histone H3 (H3K4me3), affecting histone demethylase specificity: in presence of H3K4me3, it has no demethylase activity toward H3K9me2, while it has high activity toward H3K27me2. Demethylates H3K9me2 in absence of H3K4me3. Has activity toward H4K20Me1 only when nucleosome is used as a substrate and when not histone octamer is used as substrate. In Homo sapiens (Human), this protein is Lysine-specific demethylase 7A (KDM7A).